The primary structure comprises 217 residues: Adenylate kinase (217 aa).

10 to 15 (GAGKGT) lines the ATP pocket. The interval 30–59 (STGDMFRAAMKEETPLGLEAKSYIDKGELV) is NMP. AMP is bound by residues threonine 31, arginine 36, 57–59 (ELV), 85–88 (GFPR), and glutamine 92. The tract at residues 126–163 (GRRICSVCGTTYHLVFNPPKTPGICDKDGGELYQRADD) is LID. Residue arginine 127 participates in ATP binding. The Zn(2+) site is built by cysteine 130 and cysteine 133. 136-137 (TY) is an ATP binding site. 2 residues coordinate Zn(2+): cysteine 150 and aspartate 153. Residues arginine 160 and arginine 171 each contribute to the AMP site. Residue glutamine 199 coordinates ATP.

This sequence belongs to the adenylate kinase family. As to quaternary structure, monomer.

It is found in the cytoplasm. The enzyme catalyses AMP + ATP = 2 ADP. It functions in the pathway purine metabolism; AMP biosynthesis via salvage pathway; AMP from ADP: step 1/1. In terms of biological role, catalyzes the reversible transfer of the terminal phosphate group between ATP and AMP. Plays an important role in cellular energy homeostasis and in adenine nucleotide metabolism. In Bacillus subtilis (strain 168), this protein is Adenylate kinase.